The chain runs to 615 residues: Putative HPr kinase/phosphorylase (615 aa).

Residue 480–487 (GKSGIGKS) participates in ATP binding.

Belongs to the HPrK/P family.

It catalyses the reaction [HPr protein]-L-serine + ATP = [HPr protein]-O-phospho-L-serine + ADP + H(+). It carries out the reaction [HPr protein]-O-phospho-L-serine + phosphate + H(+) = [HPr protein]-L-serine + diphosphate. Its function is as follows. Catalyzes the ATP- as well as the pyrophosphate-dependent phosphorylation of a specific serine residue in HPr, a phosphocarrier protein of the phosphoenolpyruvate-dependent sugar phosphotransferase system (PTS). HprK/P also catalyzes the pyrophosphate-producing, inorganic phosphate-dependent dephosphorylation (phosphorolysis) of seryl-phosphorylated HPr (P-Ser-HPr). The polypeptide is Putative HPr kinase/phosphorylase (hprK) (Fusobacterium nucleatum subsp. nucleatum (strain ATCC 25586 / DSM 15643 / BCRC 10681 / CIP 101130 / JCM 8532 / KCTC 2640 / LMG 13131 / VPI 4355)).